We begin with the raw amino-acid sequence, 366 residues long: MLIWLVELSEYFKFLNLFRYITFRTGAALFTSALIVFLFGPTIINSLRIRQGKGQPIRADGPQTHFKKAGTPTMGGLMILAGIVGASLLWADLSNVYVVATLLVTLGFGAIGFYDDYLKVTKQSHMGFSGKARLGIEFVIAGIAVYFMMRTALASGIAGSTFGSSIAFPFFKDFMINIGIMFVVFGGFVIVGAGNAVNLTDGLDGLAIVPVMIAAASFGVIAYLAGNVVFANYLQINFVPGTGELAVVLGAVIGAGLGFLWFNAPPAAIFMGDTGSLALGGTIGTVAVATKHEIVMAIIGGLFVIETLSVIIQVGFFKMTGRRVFLMAPIHHHFEKKGWTESQVVIRFWIVAVGLAMLGLSTLKLR.

A run of 10 helical transmembrane segments spans residues 27–47 (AALF…INSL), 71–91 (TPTM…LLWA), 93–113 (LSNV…AIGF), 138–158 (FVIA…SGIA), 174–194 (FMIN…VGAG), 205–225 (GLAI…AYLA), 245–265 (LAVV…FNAP), 268–288 (AIFM…TVAV), 294–314 (IVMA…IIQV), and 343–363 (QVVI…LSTL).

Belongs to the glycosyltransferase 4 family. MraY subfamily. The cofactor is Mg(2+).

The protein localises to the cell inner membrane. It catalyses the reaction UDP-N-acetyl-alpha-D-muramoyl-L-alanyl-gamma-D-glutamyl-meso-2,6-diaminopimeloyl-D-alanyl-D-alanine + di-trans,octa-cis-undecaprenyl phosphate = di-trans,octa-cis-undecaprenyl diphospho-N-acetyl-alpha-D-muramoyl-L-alanyl-D-glutamyl-meso-2,6-diaminopimeloyl-D-alanyl-D-alanine + UMP. Its pathway is cell wall biogenesis; peptidoglycan biosynthesis. Catalyzes the initial step of the lipid cycle reactions in the biosynthesis of the cell wall peptidoglycan: transfers peptidoglycan precursor phospho-MurNAc-pentapeptide from UDP-MurNAc-pentapeptide onto the lipid carrier undecaprenyl phosphate, yielding undecaprenyl-pyrophosphoryl-MurNAc-pentapeptide, known as lipid I. The polypeptide is Phospho-N-acetylmuramoyl-pentapeptide-transferase (Rhizobium johnstonii (strain DSM 114642 / LMG 32736 / 3841) (Rhizobium leguminosarum bv. viciae)).